The primary structure comprises 221 residues: Putative 5'(3')-deoxyribonucleotidase R824 (221 aa).

Mg(2+)-binding residues include Asp16 and Asp18. Residue Asp18 is the Nucleophile of the active site. Positions 18, 103, and 138 each coordinate phosphate. A Mg(2+)-binding site is contributed by Asp149.

It belongs to the 5'(3')-deoxyribonucleotidase family. Mg(2+) is required as a cofactor.

Functionally, dephosphorylates the 5' and 2'(3')-phosphates of deoxyribonucleotides. This chain is Putative 5'(3')-deoxyribonucleotidase R824, found in Acanthamoeba polyphaga mimivirus (APMV).